A 524-amino-acid chain; its full sequence is Na(+)/H(+) antiporter NhaB (524 aa).

13 helical membrane passes run 23–43 (LAII…SPFV), 45–65 (GWML…CYPL), 98–118 (LLLI…LFIF), 136–156 (CVAS…AVVI), 203–223 (LMMH…VGEP), 239–259 (FFMR…LVCI), 304–324 (ALIG…VGLV), 325–345 (GLSV…HALG), 358–378 (LTVF…TPII), 392–412 (LFYL…VGTV), 420–440 (AFEL…AINT), 448–468 (ATPN…APLI), and 479–499 (ALPY…YLLV).

It belongs to the NhaB Na(+)/H(+) (TC 2.A.34) antiporter family.

The protein resides in the cell inner membrane. It catalyses the reaction 2 Na(+)(in) + 3 H(+)(out) = 2 Na(+)(out) + 3 H(+)(in). Functionally, na(+)/H(+) antiporter that extrudes sodium in exchange for external protons. The sequence is that of Na(+)/H(+) antiporter NhaB from Yersinia enterocolitica serotype O:8 / biotype 1B (strain NCTC 13174 / 8081).